A 398-amino-acid chain; its full sequence is NADH-quinone oxidoreductase subunit D (398 aa).

Belongs to the complex I 49 kDa subunit family. In terms of assembly, NDH-1 is composed of 14 different subunits. Subunits NuoB, C, D, E, F, and G constitute the peripheral sector of the complex.

It is found in the cell inner membrane. The catalysed reaction is a quinone + NADH + 5 H(+)(in) = a quinol + NAD(+) + 4 H(+)(out). Its function is as follows. NDH-1 shuttles electrons from NADH, via FMN and iron-sulfur (Fe-S) centers, to quinones in the respiratory chain. The immediate electron acceptor for the enzyme in this species is believed to be ubiquinone. Couples the redox reaction to proton translocation (for every two electrons transferred, four hydrogen ions are translocated across the cytoplasmic membrane), and thus conserves the redox energy in a proton gradient. This chain is NADH-quinone oxidoreductase subunit D, found in Bradyrhizobium sp. (strain BTAi1 / ATCC BAA-1182).